The primary structure comprises 384 residues: S-adenosylmethionine synthase (384 aa).

His15 lines the ATP pocket. Position 17 (Asp17) interacts with Mg(2+). Residue Glu43 participates in K(+) binding. Glu56 and Gln99 together coordinate L-methionine. The segment at 99-109 is flexible loop; the sequence is QSPDINQGVDR. ATP contacts are provided by residues 164–166, 230–231, Asp239, 245–246, Ala262, and Lys266; these read DAK, RF, and RK. Asp239 lines the L-methionine pocket. Lys270 lines the L-methionine pocket.

It belongs to the AdoMet synthase family. As to quaternary structure, homotetramer; dimer of dimers. Requires Mg(2+) as cofactor. The cofactor is K(+).

Its subcellular location is the cytoplasm. It carries out the reaction L-methionine + ATP + H2O = S-adenosyl-L-methionine + phosphate + diphosphate. It participates in amino-acid biosynthesis; S-adenosyl-L-methionine biosynthesis; S-adenosyl-L-methionine from L-methionine: step 1/1. In terms of biological role, catalyzes the formation of S-adenosylmethionine (AdoMet) from methionine and ATP. The overall synthetic reaction is composed of two sequential steps, AdoMet formation and the subsequent tripolyphosphate hydrolysis which occurs prior to release of AdoMet from the enzyme. The polypeptide is S-adenosylmethionine synthase (Salmonella arizonae (strain ATCC BAA-731 / CDC346-86 / RSK2980)).